Here is a 965-residue protein sequence, read N- to C-terminus: Phosphoenolpyruvate carboxylase 1 (965 aa).

Ser-11 carries the phosphoserine modification. The active site involves His-172. D-glucose 6-phosphate contacts are provided by Trp-283, Arg-450, and Asp-597. Lys-600 is a catalytic residue. Arg-635 serves as a coordination point for D-glucose 6-phosphate. Arg-641 is an active-site residue. Arg-641 contributes to the L-aspartate binding site. Residue Thr-665 participates in D-glucose 6-phosphate binding. Residue Gln-673 coordinates L-aspartate. D-glucose 6-phosphate contacts are provided by residues Arg-753 and 767–769 (RAI). 3 residues coordinate L-aspartate: Lys-829, Arg-888, and Asn-963.

It belongs to the PEPCase type 1 family. Homotetramer. The cofactor is Mg(2+). As to expression, expressed in roots and stems and at low levels in leaves. Preferentially expressed in the phloem and in root tips.

It localises to the cytoplasm. The enzyme catalyses oxaloacetate + phosphate = phosphoenolpyruvate + hydrogencarbonate. With respect to regulation, activated by the allosteric regulator glucose-6-phosphate. Inhibited by malate and aspartate. Up regulated by light-reversible phosphorylation. Functionally, through the carboxylation of phosphoenolpyruvate (PEP) it forms oxaloacetate, a four-carbon dicarboxylic acid source for the tricarboxylic acid cycle. May be involved in phloem loading with sucrose and in anions and cations uptake and amino acid biosynthesis in roots. The chain is Phosphoenolpyruvate carboxylase 1 from Flaveria trinervia (Clustered yellowtops).